Consider the following 164-residue polypeptide: Sec-independent protein translocase protein TatB (164 aa).

A helical membrane pass occupies residues 1–21 (MIDIGLSKMALIGAVALIVIG). Residues 81–102 (ASEFQKDWESGTSDAAATGHDG) form a disordered region.

Belongs to the TatB family. The Tat system comprises two distinct complexes: a TatABC complex, containing multiple copies of TatA, TatB and TatC subunits, and a separate TatA complex, containing only TatA subunits. Substrates initially bind to the TatABC complex, which probably triggers association of the separate TatA complex to form the active translocon.

It localises to the cell inner membrane. Functionally, part of the twin-arginine translocation (Tat) system that transports large folded proteins containing a characteristic twin-arginine motif in their signal peptide across membranes. Together with TatC, TatB is part of a receptor directly interacting with Tat signal peptides. TatB may form an oligomeric binding site that transiently accommodates folded Tat precursor proteins before their translocation. This chain is Sec-independent protein translocase protein TatB, found in Paracidovorax citrulli (strain AAC00-1) (Acidovorax citrulli).